Reading from the N-terminus, the 394-residue chain is NAD(P)H-quinone oxidoreductase subunit H (394 aa).

The protein belongs to the complex I 49 kDa subunit family. In terms of assembly, NDH-1 can be composed of about 15 different subunits; different subcomplexes with different compositions have been identified which probably have different functions.

The protein resides in the cellular thylakoid membrane. It carries out the reaction a plastoquinone + NADH + (n+1) H(+)(in) = a plastoquinol + NAD(+) + n H(+)(out). It catalyses the reaction a plastoquinone + NADPH + (n+1) H(+)(in) = a plastoquinol + NADP(+) + n H(+)(out). Its function is as follows. NDH-1 shuttles electrons from an unknown electron donor, via FMN and iron-sulfur (Fe-S) centers, to quinones in the respiratory and/or the photosynthetic chain. The immediate electron acceptor for the enzyme in this species is believed to be plastoquinone. Couples the redox reaction to proton translocation, and thus conserves the redox energy in a proton gradient. Cyanobacterial NDH-1 also plays a role in inorganic carbon-concentration. In Synechococcus sp. (strain ATCC 27144 / PCC 6301 / SAUG 1402/1) (Anacystis nidulans), this protein is NAD(P)H-quinone oxidoreductase subunit H.